Reading from the N-terminus, the 234-residue chain is Heme-copper oxidase subunit 2 (234 aa).

The next 2 membrane-spanning stretches (helical) occupy residues 13 to 33 (LFLL…AFFI) and 72 to 92 (LLFV…DETL). His151, Cys188, Cys192, and His196 together coordinate Cu cation.

It belongs to the cytochrome c oxidase subunit 2 family.

It is found in the cell membrane. This Aeropyrum pernix (strain ATCC 700893 / DSM 11879 / JCM 9820 / NBRC 100138 / K1) protein is Heme-copper oxidase subunit 2 (aoxA).